Here is a 238-residue protein sequence, read N- to C-terminus: Orotidine 5'-phosphate decarboxylase (238 aa).

Residues Asp-18, Lys-40, 67 to 76 (DMKLLDIDNT), Thr-122, Arg-183, Gln-192, and Arg-213 each bind substrate. The active-site Proton donor is Lys-69.

Belongs to the OMP decarboxylase family. Type 1 subfamily. As to quaternary structure, homodimer.

It catalyses the reaction orotidine 5'-phosphate + H(+) = UMP + CO2. Its pathway is pyrimidine metabolism; UMP biosynthesis via de novo pathway; UMP from orotate: step 2/2. In terms of biological role, catalyzes the decarboxylation of orotidine 5'-monophosphate (OMP) to uridine 5'-monophosphate (UMP). This chain is Orotidine 5'-phosphate decarboxylase, found in Brucella canis (strain ATCC 23365 / NCTC 10854 / RM-666).